The sequence spans 147 residues: 3-hydroxyacyl-[acyl-carrier-protein] dehydratase FabZ (147 aa).

The active site involves H53.

Belongs to the thioester dehydratase family. FabZ subfamily.

It localises to the cytoplasm. It carries out the reaction a (3R)-hydroxyacyl-[ACP] = a (2E)-enoyl-[ACP] + H2O. Its function is as follows. Involved in unsaturated fatty acids biosynthesis. Catalyzes the dehydration of short chain beta-hydroxyacyl-ACPs and long chain saturated and unsaturated beta-hydroxyacyl-ACPs. In Synechococcus sp. (strain WH7803), this protein is 3-hydroxyacyl-[acyl-carrier-protein] dehydratase FabZ.